Here is a 168-residue protein sequence, read N- to C-terminus: Photosystem I assembly protein Ycf3 (168 aa).

TPR repeat units lie at residues 35–68 (AFTYYRDGMSAQSEGNYAEALQNYYEAMRLEIDP), 72–105 (SYILYNIGLIHTSNGEHTKALEYYFRALERNPFL), and 120–153 (GEQAIQQGDSEMAEAWFAQAAEYWKQAITLTPGN).

It belongs to the Ycf3 family. In terms of assembly, interacts with Y3IP1.

The protein resides in the plastid. It localises to the chloroplast thylakoid membrane. In terms of biological role, essential for the assembly of the photosystem I (PSI) complex. May act as a chaperone-like factor to guide the assembly of the PSI subunits. The polypeptide is Photosystem I assembly protein Ycf3 (Arabidopsis thaliana (Mouse-ear cress)).